The chain runs to 448 residues: Trigger factor (448 aa).

One can recognise a PPIase FKBP-type domain in the interval Gly-167 to Pro-253.

It belongs to the FKBP-type PPIase family. Tig subfamily.

Its subcellular location is the cytoplasm. It carries out the reaction [protein]-peptidylproline (omega=180) = [protein]-peptidylproline (omega=0). Its function is as follows. Involved in protein export. Acts as a chaperone by maintaining the newly synthesized protein in an open conformation. Functions as a peptidyl-prolyl cis-trans isomerase. This is Trigger factor from Borrelia duttonii (strain Ly).